The following is a 557-amino-acid chain: CTP synthase (557 aa).

The amidoligase domain stretch occupies residues 1–267 (MAKFVFVTGG…CREVLDVLDL (267 aa)). Ser13 contacts CTP. Ser13 contacts UTP. ATP is bound by residues 14–19 (SIGKGI) and Asp71. Mg(2+)-binding residues include Asp71 and Glu141. CTP is bound by residues 148–150 (DIE), 188–193 (KTKPTQ), and Lys224. UTP-binding positions include 188–193 (KTKPTQ) and Lys224. Residues 292-534 (KVALVGKYVQ…IEAAQQRLPC (243 aa)) form the Glutamine amidotransferase type-1 domain. L-glutamine is bound at residue Gly354. The Nucleophile; for glutamine hydrolysis role is filled by Cys381. L-glutamine-binding positions include 382–385 (LGMQ), Glu405, and Arg462. Catalysis depends on residues His507 and Glu509. Positions 532–557 (LPCSPSEAMRQQNNSAAGSSHPSLQP) are disordered. Over residues 540–557 (MRQQNNSAAGSSHPSLQP) the composition is skewed to polar residues.

The protein belongs to the CTP synthase family. Homotetramer.

It carries out the reaction UTP + L-glutamine + ATP + H2O = CTP + L-glutamate + ADP + phosphate + 2 H(+). The enzyme catalyses L-glutamine + H2O = L-glutamate + NH4(+). It catalyses the reaction UTP + NH4(+) + ATP = CTP + ADP + phosphate + 2 H(+). It participates in pyrimidine metabolism; CTP biosynthesis via de novo pathway; CTP from UDP: step 2/2. With respect to regulation, allosterically activated by GTP, when glutamine is the substrate; GTP has no effect on the reaction when ammonia is the substrate. The allosteric effector GTP functions by stabilizing the protein conformation that binds the tetrahedral intermediate(s) formed during glutamine hydrolysis. Inhibited by the product CTP, via allosteric rather than competitive inhibition. In terms of biological role, catalyzes the ATP-dependent amination of UTP to CTP with either L-glutamine or ammonia as the source of nitrogen. Regulates intracellular CTP levels through interactions with the four ribonucleotide triphosphates. In Synechococcus sp. (strain CC9311), this protein is CTP synthase.